The chain runs to 197 residues: uncharacterized protein (197 aa).

The span at 168 to 185 (QRDDFSEDSHANDPKLVG) shows a compositional bias: basic and acidic residues. Residues 168-197 (QRDDFSEDSHANDPKLVGDDYVPQAPEQIN) are disordered.

This is an uncharacterized protein from Escherichia coli (strain K12).